A 442-amino-acid polypeptide reads, in one-letter code: Syndecan-3 (442 aa).

Disordered regions lie at residues 1 to 25 and 47 to 80; these read MKPG…APGA and RWRN…YSGS. The N-terminal stretch at 1–44 is a signal peptide; that stretch reads MKPGPPRRGTAQGQRVDTATHAPGARGLLLPPLLLLLLAGRAAG. Residues 45 to 387 are Extracellular-facing; the sequence is AQRWRNENFE…SILERKEVLV (343 aa). The segment covering 48–58 has biased composition (basic and acidic residues); that stretch reads WRNENFERPVD. The span at 61 to 75 shows a compositional bias: acidic residues; the sequence is GSGDDDSFPDDELDD. Ser-78, Ser-80, Ser-82, and Ser-89 each carry an O-linked (Xyl...) (glycosaminoglycan) serine glycan. O-linked (GalNAc) threonine; by GALNT13 glycosylation occurs at Thr-107. Disordered stretches follow at residues 152 to 199, 253 to 293, and 305 to 327; these read ESSQ…PATA, ATSR…AQTP, and EPEV…TTQP. Low complexity-rich tracts occupy residues 157-199 and 276-287; these read ATTI…PATA and TLPLGTTAPGPT. Ser-161 carries an O-linked (GalNAc) serine; by GALNT13 glycan. O-linked (GalNAc) threonine; by GALNT13 glycosylation is found at Thr-162, Thr-163, Thr-170, and Thr-172. O-linked (Xyl...) (glycosaminoglycan) serine glycans are attached at residues Ser-315 and Ser-367. A helical membrane pass occupies residues 388–408; sequence AVIVGGVVGALFAAFLVTLLI. A phosphotyrosine mark is found at Tyr-409, Tyr-419, Tyr-431, and Tyr-441. Topologically, residues 409-442 are cytoplasmic; sequence YRMKKKDEGSYTLEEPKQASVTYQKPDKQEEFYA. The interval 419 to 442 is disordered; it reads YTLEEPKQASVTYQKPDKQEEFYA. Over residues 433–442 the composition is skewed to basic and acidic residues; that stretch reads KPDKQEEFYA.

Belongs to the syndecan proteoglycan family. Interacts with TIAM1. Interacts with PTN (via heparan sulfate chains); this interaction mediates the neurite outgrowth-promoting signal from PTN to the cytoskeleton of growing neurites; this interaction mediates osteoblast recruitment. Interacts with MDK; this interaction induces SDC3 clustering; this interaction induces neuronal cell adhesion and neurite outgrowth. Post-translationally, O-glycosylated within the Thr/Ser-rich region which could interact with lectin domains on other molecules.

It is found in the cell membrane. Functionally, cell surface proteoglycan that may bear heparan sulfate. May have a role in the organization of cell shape by affecting the actin cytoskeleton, possibly by transferring signals from the cell surface in a sugar-dependent mechanism. In Mus musculus (Mouse), this protein is Syndecan-3 (Sdc3).